Consider the following 637-residue polypeptide: Rab11 family-interacting protein 4 (637 aa).

One can recognise an EF-hand domain in the interval 49–84; it reads GQGEEVEKLVKYLDPNDLGRINFKDFCRGVFAMKGC. Ca(2+)-binding residues include aspartate 62, asparagine 64, arginine 68, and aspartate 73. The interval 82-637 is necessary for interaction with RAB11A, subcellular location, homo- or heterooligomerization; that stretch reads KGCEELLKDV…HNPSILEIKH (556 aa). Disordered regions lie at residues 138 to 175 and 219 to 256; these read EEEA…PAEK and YGEG…SAGQ. Residues 280 to 617 adopt a coiled-coil conformation; that stretch reads KINLLNDLEA…EEINFRLRQY (338 aa). In terms of domain architecture, FIP-RBD spans 574–636; the sequence is EAKNLFAAQT…DHNPSILEIK (63 aa).

In terms of assembly, homodimer. Forms a complex with Rab11 (RAB11A or RAB11B) and ARF6. Interacts with RAB11A; the interaction is direct. Forms a heterooligomeric complex with RAB11FIP2, RAB11FIP3 and RAB11FIP5. Interacts with ECPAS. As to quaternary structure, (Microbial infection) Interacts with human cytomegalovirus/HHV-5 protein gM/UL100. Present at high level in testis (at protein level). Weakly expressed in other tissues.

It is found in the endosome. The protein resides in the cytoplasm. It localises to the cytoskeleton. The protein localises to the spindle. Its subcellular location is the microtubule organizing center. It is found in the centrosome. The protein resides in the recycling endosome membrane. It localises to the cleavage furrow. The protein localises to the midbody. Its subcellular location is the cytoplasmic vesicle. Acts as a regulator of endocytic traffic by participating in membrane delivery. Required for the abscission step in cytokinesis, possibly by acting as an 'address tag' delivering recycling endosome membranes to the cleavage furrow during late cytokinesis. In case of infection by HCMV (human cytomegalovirus), may participate in egress of the virus out of nucleus; this function is independent of ARF6. In Homo sapiens (Human), this protein is Rab11 family-interacting protein 4 (RAB11FIP4).